The following is a 388-amino-acid chain: N-acetylneuraminate epimerase (388 aa).

The N-terminal stretch at M1–A26 is a signal peptide. Kelch repeat units lie at residues M48 to G92, K94 to A147, G149 to D186, S187 to G232, F236 to A285, A307 to G356, and L358 to E387.

This sequence belongs to the NanM family. As to quaternary structure, homodimer.

The protein localises to the periplasm. It carries out the reaction N-acetyl-alpha-neuraminate = N-acetyl-beta-neuraminate. Its function is as follows. Converts alpha-N-acetylneuranimic acid (Neu5Ac) to the beta-anomer, accelerating the equilibrium between the alpha- and beta-anomers. Probably facilitates sialidase-negative bacteria to compete successfully for limited amounts of extracellular Neu5Ac, which is likely taken up in the beta-anomer. In addition, the rapid removal of sialic acid from solution might be advantageous to the bacterium to damp down host responses. In Brucella suis (strain ATCC 23445 / NCTC 10510), this protein is N-acetylneuraminate epimerase.